The chain runs to 782 residues: MKKNSYTRLSIAILSTLYSVSSLADLKSQCLAGVPHFTGELITGNPNDLPVYIEADQARLNQSVSASYEGNVEIQQGNRQLRAQRADISQQKQPNGLQRLAHVRGGFEYQDHQIQLKGEEAQVQLNTKNTDIKNADYQLVDRQGRGKAESIALREDYRLMTNAVFTSCLPQDNAWSIEAKEMRQHIQEEYAEMWHARFKVHGVPIFYTPYLQLPIGDRRRSGLLLPNFGTSNRDGYFYEQPFYWNIAPNLDATMTPKYMSKRGWQLNGEFRYLSPIGEGKIAGEYLKQDRLTDYRNRDRSRHLFYWTHHSSFLQNWRLNLDYTRVSDQRYFSDFDSAYGSSTDGYADQKFRVAYYQPHYNIAISAKQFQIFNEVDIGPYRALPQVDFNYYQNALFDSPLNFKLFSQVVHFDNKSPLMPKAWRFHAEPSINLPLSNRYGSLNIETKLYATHYQQTQGRAAEAEQVERKINRVLPQVKVDLQTVLASQQTFIEGYTQTLEPHVQYLYRPYKDQSNIGSKLNNAYLGFGYDSSLLQQDYFGLFRDRRYSGLDRIASANQFTVGGTTRIYDKKGNERFNFSAGQIYYLQDSRIDNSKENSTYGRSSSWSLASNWKINDQWRWQGSYQYDTRLNKSSLGNFTLEYNPTGNNIIQLSYRYASQQYIDQNLTSAANRYGQDIKQLGLTVAWALTDQWAVVARHYQDLALRKPVEQYLGLEYSTCCWAINVGARRSVTSKENQTANQIFYDKSIGINIELRGLGRDDHKGNIEKMLQRGKLPYLQAFSLY.

The first 24 residues, 1–24, serve as a signal peptide directing secretion; that stretch reads MKKNSYTRLSIAILSTLYSVSSLA.

The protein belongs to the LptD family. As to quaternary structure, component of the lipopolysaccharide transport and assembly complex. Interacts with LptE and LptA.

The protein localises to the cell outer membrane. Its function is as follows. Together with LptE, is involved in the assembly of lipopolysaccharide (LPS) at the surface of the outer membrane. The sequence is that of LPS-assembly protein LptD from Pasteurella multocida (strain Pm70).